A 281-amino-acid chain; its full sequence is Microtubule-associated protein RP/EB family member 3 (281 aa).

A Calponin-homology (CH) domain is found at N14–D116. The tract at residues V157–P181 is disordered. Residues P158–L175 show a composition bias toward polar residues. Phosphoserine is present on residues S162 and S176. One can recognise an EB1 C-terminal domain in the interval G194 to P264. An APC-binding region spans residues D217 to E260. Positions D217 to Y281 are DCTN1-binding. A disordered region spans residues G261 to Y281. Positions E272–Y281 are enriched in basic and acidic residues.

Belongs to the MAPRE family. As to quaternary structure, homodimer. Heterodimer with MAPRE1. Binds monomeric and polymerized GTP-bound tubulin. Interacts with APC2. Interacts with DCTN1 and SRCIN1. Binds to the C-terminal domain of APC. Interacts (via C-terminus) with CLIP1. Interacts with SLAIN2 and SLAIN1. Interacts with AKAP9. Interacts with PDE4DIP. Interacts with PDE4DIP isoform 13/MMG8/SMYLE; this interaction is required for its recruitment to the Golgi apparatus. Predominantly expressed in brain and muscle.

Its subcellular location is the cytoplasm. It is found in the cytoskeleton. Functionally, plus-end tracking protein (+TIP) that binds to the plus-end of microtubules and regulates the dynamics of the microtubule cytoskeleton. Promotes microtubule growth. May be involved in spindle function by stabilizing microtubules and anchoring them at centrosomes. Also acts as a regulator of minus-end microtubule organization: interacts with the complex formed by AKAP9 and PDE4DIP, leading to recruit CAMSAP2 to the Golgi apparatus, thereby tethering non-centrosomal minus-end microtubules to the Golgi, an important step for polarized cell movement. Promotes elongation of CAMSAP2-decorated microtubule stretches on the minus-end of microtubules. The polypeptide is Microtubule-associated protein RP/EB family member 3 (MAPRE3) (Homo sapiens (Human)).